A 218-amino-acid polypeptide reads, in one-letter code: Large ribosomal subunit protein uL3 (218 aa).

It belongs to the universal ribosomal protein uL3 family. In terms of assembly, part of the 50S ribosomal subunit. Forms a cluster with proteins L14 and L19.

In terms of biological role, one of the primary rRNA binding proteins, it binds directly near the 3'-end of the 23S rRNA, where it nucleates assembly of the 50S subunit. This chain is Large ribosomal subunit protein uL3, found in Rhodococcus jostii (strain RHA1).